The chain runs to 340 residues: MQLRDALEQLLNKHDLTAEQMEWVMQMLMSGQATSAQIAAILVALRAKGETVEEITAAASVMRSLATQVTLTDKTHMVDTCGTGGDGANTFNISTASAFVAAAAGAKVAKHGSRSVSSQSGSADLLEKAGVNLNLTPEQVAECVETVGVGFMYAPAHHSAMKHVIGVRKEIGVRTLFNILGPLTNPAQAPAQVLGVYDSSLLMPFAQVLRELGSKHVMIVHAQDGLDEISIASLTDVAELKEGVITQWTIDPSEYDADHPDLSELKIDSAQDSLNIIHAVLANDHSAAADIVCLNAGASIYVSGVVSTYAEGVQMAKNVIANGQARTLFNQFVEKTQSFA.

Residues G82, 85–86 (GD), T90, 92–95 (NIST), 110–118 (KHGSRSVSS), and S122 each bind 5-phospho-alpha-D-ribose 1-diphosphate. G82 serves as a coordination point for anthranilate. S94 provides a ligand contact to Mg(2+). R168 serves as a coordination point for anthranilate. Mg(2+) is bound by residues D227 and E228.

This sequence belongs to the anthranilate phosphoribosyltransferase family. As to quaternary structure, homodimer. It depends on Mg(2+) as a cofactor.

The enzyme catalyses N-(5-phospho-beta-D-ribosyl)anthranilate + diphosphate = 5-phospho-alpha-D-ribose 1-diphosphate + anthranilate. It functions in the pathway amino-acid biosynthesis; L-tryptophan biosynthesis; L-tryptophan from chorismate: step 2/5. In terms of biological role, catalyzes the transfer of the phosphoribosyl group of 5-phosphorylribose-1-pyrophosphate (PRPP) to anthranilate to yield N-(5'-phosphoribosyl)-anthranilate (PRA). This Hydrogenovibrio crunogenus (strain DSM 25203 / XCL-2) (Thiomicrospira crunogena) protein is Anthranilate phosphoribosyltransferase.